Reading from the N-terminus, the 1669-residue chain is Polycomb group protein Asx (1669 aa).

Residues 90 to 109 (IPPEKKPMAPSEEAAVSTAP) form a disordered region. Residues 215 to 338 (PDSILASTNL…FEPFWGEKNS (124 aa)) enclose the DEUBAD domain. 2 consecutive short sequence motifs (LXXLL motif) follow at residues 224–228 (LRALL) and 244–248 (LIQLL). The short motif at 283-285 (NEF) is the NEF motif element. The segment covering 336–352 (KNSRGKDKDKLESDCKN) has biased composition (basic and acidic residues). Disordered stretches follow at residues 336–378 (KNSR…QQAT), 410–478 (SSTF…IVPN), 635–718 (FFTS…SAGA), 952–972 (MPHQ…QQQR), 1174–1193 (QQQS…QQQL), 1398–1437 (PGPG…PEQL), 1482–1505 (LHSI…TAGS), and 1587–1610 (SPTA…QHQH). 3 stretches are compositionally biased toward polar residues: residues 367 to 378 (ATSQQKPLQQAT), 413 to 425 (FPPT…VLNE), and 434 to 450 (PSSS…TIAT). Residues 465-474 (KDSKQPKMDE) show a composition bias toward basic and acidic residues. Positions 635–650 (FFTSSSSSNTATTAAN) are enriched in low complexity. A compositionally biased stretch (basic and acidic residues) spans 651–661 (KLEEHSDKPED). Residues 666-718 (IASSISGSTPASSITSTSCTSSSSSSASMSSSCSSSNSGSTTTAPTTSSSAGA) show a composition bias toward low complexity. 2 stretches are compositionally biased toward low complexity: residues 1174 to 1192 (QQQS…QQQQ) and 1404 to 1436 (TATA…APEQ). Residues 1592–1610 (PSPINQQPQSQPTGTQHQH) are compositionally biased toward low complexity. A PHD-type; atypical zinc finger spans residues 1602 to 1666 (QPTGTQHQHP…IGAAKLCVAC (65 aa)).

Belongs to the Asx family. In terms of assembly, component of the polycomb repressive deubiquitinase (PR-DUB) complex, at least composed of caly/calypso, Asx and sba (MBD5/6 homolog). Interacts (via DEUBAD domain) with caly/calypso (via ULD domain); the interaction produces a stable heterodimer with a composite binding site for ubiquitin. Two copies of the caly-Asx heterodimer assemble into a bidentate tetramer. Interacts (via PHD domain) with sba (probably via MBD domain); the interaction is important for the stability of the PR-DUB complex. Interacts with tant. Interacts with cyclin CycG. Highly expressed in nurse cells and deposited in oocytes late in oogenesis. Ubiquitous in early embryos. Late embryos show higher levels in CNS and neurectoderm.

It is found in the nucleus. It localises to the chromosome. Non-catalytic component of the polycomb repressive deubiquitinase (PR-DUB) complex, a complex that specifically mediates deubiquitination of histone H2A monoubiquitinated at 'Lys-119' (H2AK118ub1). Activator of the PR-DUB complex involved in ubiquitin binding and allosteric activation of calypso deubiquitinase activity. PR-DUB does not deubiquitinate monoubiquitinated histone H2B. PR-DUB is required to maintain the transcriptionally repressive state of homeotic genes throughout development. The PR-DUB complex has weak or no activity toward 'Lys-48'- and 'Lys-63'-linked polyubiquitin chains. Atypical Polycomb group protein, which may be involved in both Polycomb group (PcG) and trithorax group (trxG) complexes. PcG and trxG proteins act by forming multiprotein complexes, which are respectively required to maintain the transcriptionally repressive and transcriptionally active state of homeotic genes throughout development. PcG and trxG protein complexes are not required to initiate repression and activation, but to maintain it during later stages of development. This Drosophila melanogaster (Fruit fly) protein is Polycomb group protein Asx.